The sequence spans 104 residues: Pterin-4-alpha-carbinolamine dehydratase (104 aa).

Ala2 is subject to N-acetylalanine. Residues 61 to 63 (DHH) and 78 to 81 (STHD) each bind substrate.

This sequence belongs to the pterin-4-alpha-carbinolamine dehydratase family. Homotetramer and homodimer.

It is found in the cytoplasm. It localises to the nucleus. The catalysed reaction is (4aS,6R)-4a-hydroxy-L-erythro-5,6,7,8-tetrahydrobiopterin = (6R)-L-erythro-6,7-dihydrobiopterin + H2O. Functionally, involved in tetrahydrobiopterin biosynthesis. Seems to both prevent the formation of 7-pterins and accelerate the formation of quinonoid-BH2. Coactivator for HNF1A-dependent transcription. Regulates the dimerization of homeodomain protein HNF1A and enhances its transcriptional activity. Also acts as a coactivator for HNF1B-dependent transcription. In Xenopus laevis (African clawed frog), this protein is Pterin-4-alpha-carbinolamine dehydratase (pcbd).